Here is a 181-residue protein sequence, read N- to C-terminus: Translationally-controlled tumor protein homolog (181 aa).

Residues 1–181 form the TCTP domain; the sequence is MLIYKDIFTD…VKEAIIEEKC (181 aa).

Belongs to the TCTP family.

Its subcellular location is the cytoplasm. Its function is as follows. Involved in calcium binding and microtubule stabilization. This is Translationally-controlled tumor protein homolog (tct-1) from Caenorhabditis elegans.